A 147-amino-acid polypeptide reads, in one-letter code: Hemoglobin subunit epsilon (147 aa).

Residues 3-147 (HFTAEEKAAV…VAIALAHKYH (145 aa)) form the Globin domain. Phosphoserine occurs at positions 14 and 51. The heme b site is built by His64 and His93.

Belongs to the globin family. As to quaternary structure, heterotetramer of two alpha chains and two epsilon chains in early embryonic hemoglobin Gower-2; two zeta chains and two epsilon chains in early embryonic hemoglobin Gower-1. Red blood cells.

Its function is as follows. The epsilon chain is a beta-type chain of early mammalian embryonic hemoglobin. The polypeptide is Hemoglobin subunit epsilon (HBE1) (Pan troglodytes (Chimpanzee)).